Consider the following 756-residue polypeptide: Protein O-mannosyl-transferase 2 (756 aa).

The next 7 membrane-spanning stretches (helical) occupy residues Ala-64–Tyr-84, Thr-110–Leu-130, Ala-156–Leu-176, Ser-179–Leu-199, Ile-203–Phe-223, Cys-245–Ile-265, and Val-293–Ile-313. 3 MIR domains span residues Pro-344–Leu-400, Pro-410–Cys-466, and Gly-471–His-528. 4 consecutive transmembrane segments (helical) span residues Pro-602–Ala-622, Leu-643–Ile-663, His-672–Leu-692, and Ser-713–Met-733.

The protein belongs to the glycosyltransferase 39 family. In terms of tissue distribution, widely expressed. Has particularly strong expression in ovary, testis, liver, brain, muscle, heart and eye.

It is found in the endoplasmic reticulum membrane. It catalyses the reaction a di-trans,poly-cis-dolichyl beta-D-mannosyl phosphate + L-seryl-[protein] = 3-O-(alpha-D-mannosyl)-L-seryl-[protein] + a di-trans,poly-cis-dolichyl phosphate + H(+). It carries out the reaction a di-trans,poly-cis-dolichyl beta-D-mannosyl phosphate + L-threonyl-[protein] = 3-O-(alpha-D-mannosyl)-L-threonyl-[protein] + a di-trans,poly-cis-dolichyl phosphate + H(+). The protein operates within protein modification; protein glycosylation. In terms of biological role, transfers mannosyl residues to the hydroxyl group of serine or threonine residues. Coexpression of both POMT1 and POMT2 is necessary for enzyme activity, expression of either POMT1 or POMT2 alone is insufficient. This chain is Protein O-mannosyl-transferase 2, found in Danio rerio (Zebrafish).